The sequence spans 470 residues: 3-isopropylmalate dehydratase large subunit (470 aa).

Polar residues predominate over residues 294–307 (PDQNTGISGSTPNP). The tract at residues 294–313 (PDQNTGISGSTPNPSDAADD) is disordered. Cys347, Cys407, and Cys410 together coordinate [4Fe-4S] cluster.

The protein belongs to the aconitase/IPM isomerase family. LeuC type 1 subfamily. Heterodimer of LeuC and LeuD. [4Fe-4S] cluster is required as a cofactor.

The enzyme catalyses (2R,3S)-3-isopropylmalate = (2S)-2-isopropylmalate. Its pathway is amino-acid biosynthesis; L-leucine biosynthesis; L-leucine from 3-methyl-2-oxobutanoate: step 2/4. Functionally, catalyzes the isomerization between 2-isopropylmalate and 3-isopropylmalate, via the formation of 2-isopropylmaleate. The sequence is that of 3-isopropylmalate dehydratase large subunit from Akkermansia muciniphila (strain ATCC BAA-835 / DSM 22959 / JCM 33894 / BCRC 81048 / CCUG 64013 / CIP 107961 / Muc).